A 223-amino-acid chain; its full sequence is Cutinase 4 (223 aa).

The first 26 residues, M1–S26, serve as a signal peptide directing secretion. C60 and C133 are joined by a disulfide. Catalysis depends on S144, which acts as the Nucleophile. The cysteines at positions 187 and 194 are disulfide-linked. Residue D191 is part of the active site. H203 functions as the Proton donor/acceptor in the catalytic mechanism.

Belongs to the cutinase family. The 2 disulfide bonds play a critical role in holding the catalytic residues in juxta-position; reduction of the disulfide bridges results in the complete inactivation of the enzyme.

The protein localises to the secreted. The catalysed reaction is cutin + H2O = cutin monomers.. Its function is as follows. Catalyzes the hydrolysis of complex carboxylic polyesters found in the cell wall of plants. Degrades cutin, a macromolecule that forms the structure of the plant cuticle. Also degrades suberin, a specialized macromolecule found in the cell wall of various plant tissues. The chain is Cutinase 4 from Emericella nidulans (strain FGSC A4 / ATCC 38163 / CBS 112.46 / NRRL 194 / M139) (Aspergillus nidulans).